We begin with the raw amino-acid sequence, 130 residues long: MIGNWNYGTGRRKSAVARVFIKAGKGDIIVNGKPIADYFSRETSLMIVRQPLELTNHGQTFDIKVNVNGGGETGQAGAVRHGITRALIDYDATLKPSLSNAGFVTRDAREVERKKVGLRKARRAKQFSKR.

This sequence belongs to the universal ribosomal protein uS9 family.

The polypeptide is Small ribosomal subunit protein uS9 (Burkholderia vietnamiensis (strain G4 / LMG 22486) (Burkholderia cepacia (strain R1808))).